The primary structure comprises 541 residues: MRLKMTTRNFPEREVPCDVEVERFTREVPCLSSLGDGWDCENQEGHLRQSALTLEKPGTQEAICEYPGFGEHLIASSDLPPSQRVLATNGFHAPDSNVSGLDCDPALPSYPKSYADKRTGDSDACGKGFNHSMEVIHGRNPVREKPYKYPESVKSFNHFTSLGHQKIMKRGKKSYEGKNFENIFTLSSSLNENQRNLPGEKQYRCTECGKCFKRNSSLVLHHRTHTGEKPYTCNECGKSFSKNYNLIVHQRIHTGEKPYECSKCGKAFSDGSALTQHQRIHTGEKPYECLECGKTFNRNSSLILHQRTHTGEKPYRCNECGKPFTDISHLTVHLRIHTGEKPYECSKCGKAFRDGSYLTQHERTHTGEKPFECAECGKSFNRNSHLIVHQKIHSGEKPYECKECGKTFIESAYLIRHQRIHTGEKPYGCNQCQKLFRNIAGLIRHQRTHTGEKPYECNQCGKAFRDSSCLTKHQRIHTKETPYQCPECGKSFKQNSHLAVHQRLHSREGPSRCPQCGKMFQKSSSLVRHQRAHLGEQPMET.

At Ser50 the chain carries Phosphoserine. 12 consecutive C2H2-type zinc fingers follow at residues 203–225, 231–253, 259–281, 287–309, 315–337, 343–365, 371–393, 399–421, 427–449, 455–477, 483–505, and 511–533; these read YRCT…HRTH, YTCN…QRIH, YECS…QRIH, YECL…QRTH, YRCN…LRIH, YECS…ERTH, FECA…QKIH, YECK…QRIH, YGCN…QRTH, YECN…QRIH, YQCP…QRLH, and SRCP…QRAH.

This sequence belongs to the krueppel C2H2-type zinc-finger protein family.

It is found in the nucleus. May be involved in transcriptional regulation. The polypeptide is Zinc finger protein 329 (ZNF329) (Homo sapiens (Human)).